The chain runs to 519 residues: 2-isopropylmalate synthase (519 aa).

Residues 12–274 (VVIFDTTLRD…WCNVESTTLT (263 aa)) enclose the Pyruvate carboxyltransferase domain. Residues D21, H209, H211, and N245 each contribute to the Mn(2+) site. The regulatory domain stretch occupies residues 398-519 (RLVSLTVIAG…QREAPVAAAS (122 aa)).

This sequence belongs to the alpha-IPM synthase/homocitrate synthase family. LeuA type 1 subfamily. In terms of assembly, homodimer. Mn(2+) serves as cofactor.

It localises to the cytoplasm. The catalysed reaction is 3-methyl-2-oxobutanoate + acetyl-CoA + H2O = (2S)-2-isopropylmalate + CoA + H(+). It functions in the pathway amino-acid biosynthesis; L-leucine biosynthesis; L-leucine from 3-methyl-2-oxobutanoate: step 1/4. Functionally, catalyzes the condensation of the acetyl group of acetyl-CoA with 3-methyl-2-oxobutanoate (2-ketoisovalerate) to form 3-carboxy-3-hydroxy-4-methylpentanoate (2-isopropylmalate). The polypeptide is 2-isopropylmalate synthase (Afipia carboxidovorans (strain ATCC 49405 / DSM 1227 / KCTC 32145 / OM5) (Oligotropha carboxidovorans)).